Consider the following 216-residue polypeptide: Ribosomal RNA small subunit methyltransferase G (216 aa).

S-adenosyl-L-methionine-binding positions include glycine 83, methionine 88, 134-135 (VE), and arginine 149.

This sequence belongs to the methyltransferase superfamily. RNA methyltransferase RsmG family.

Its subcellular location is the cytoplasm. It carries out the reaction guanosine(527) in 16S rRNA + S-adenosyl-L-methionine = N(7)-methylguanosine(527) in 16S rRNA + S-adenosyl-L-homocysteine. Specifically methylates the N7 position of guanine in position 527 of 16S rRNA. This is Ribosomal RNA small subunit methyltransferase G from Pseudomonas putida (strain GB-1).